Reading from the N-terminus, the 343-residue chain is Signal peptide peptidase 2 (343 aa).

Topologically, residues 1–19 are lumenal; it reads MKTHERAANLALAGLSLAP. The chain crosses the membrane as a helical span at residues 20 to 40; the sequence is LVVKVNPNANVILTACLAVYV. Residues 41 to 62 are Cytoplasmic-facing; it reads GCYRSVKPTPPAETMSKEHAMR. Residues 63-83 traverse the membrane as a helical segment; the sequence is FPLVGSAMLLSLFLLFKFLSK. Topologically, residues 84–89 are lumenal; sequence DLVNTV. A helical transmembrane segment spans residues 90-110; the sequence is LTAYFFILGIAALCATLLPSI. At 111–141 the chain is on the cytoplasmic side; sequence KRFLPKEWNDNAIVWRAPLFHSLSVEFTRSQ. Residues 142–162 traverse the membrane as a helical segment; that stretch reads VVASIPGFFFCIWYAAKKHWL. At 163–165 the chain is on the lumenal side; sequence ANN. Residues 166–186 traverse the membrane as a helical segment; sequence VLGISFCIQGIEMLSLGSFKT. Residues 187-188 are Cytoplasmic-facing; sequence GA. A helical transmembrane segment spans residues 189–209; the sequence is ILLSGLFFYDIFWVFFTPVMV. Asp198 is a catalytic residue. The Lumenal portion of the chain corresponds to 210–230; that stretch reads SVAKSFDAPIKLLFPTGDAAR. A helical membrane pass occupies residues 231 to 251; that stretch reads PFSMLGLGDIVIPGIFVALAL. Asp239 is an active-site residue. Residues 252-266 lie on the Cytoplasmic side of the membrane; sequence RFDVSRGIKNRYFNS. Residues 267-287 form a helical membrane-spanning segment; sequence AFLGYTVGLTVTIIVMNWFQA. Over 288 to 290 the chain is Lumenal; the sequence is AQP. Residues 290–292 carry the PAL motif; the sequence is PAL. The helical transmembrane segment at 291-311 threads the bilayer; sequence ALLYIVPGVIGFVAVHCLWNG. Topologically, residues 312–343 are cytoplasmic; that stretch reads EVKPLLEYNESKAEEEEACEEDTDSKQNKKKE. A compositionally biased stretch (acidic residues) spans 324-334; sequence AEEEEACEEDT. The interval 324 to 343 is disordered; the sequence is AEEEEACEEDTDSKQNKKKE. The Endoplasmic reticulum targeting signal signature appears at 340–343; the sequence is KKKE.

Belongs to the peptidase A22B family. As to expression, ubiquitous.

It is found in the endoplasmic reticulum membrane. Functionally, intramembrane-cleaving aspartic protease (I-CLiP) that cleaves type II membrane signal peptides in the hydrophobic plane of the membrane. Catalyzes intramembrane proteolysis of some signal peptides after they have been cleaved from a preprotein, resulting in the release of the fragment from the ER membrane into the cytoplasm. The polypeptide is Signal peptide peptidase 2 (SPP2) (Oryza sativa subsp. japonica (Rice)).